The following is a 91-amino-acid chain: Hepcidin-2 (91 aa).

Positions 1–24 are cleaved as a signal peptide; that stretch reads MKLSNVFLAAVVILTCVCVFQITA. Positions 25–64 are excised as a propeptide; sequence VPFIQQVQDEHHVESEELQENQHLTEAEHRLTDPLVLFRT. Disulfide bonds link C73-C89, C76-C79, C77-C85, and C80-C88.

This sequence belongs to the hepcidin family.

The protein localises to the secreted. Its function is as follows. Seems to act as a signaling molecule involved in the maintenance of iron homeostasis. Seems to be required in conjunction with HFE to regulate both intestinal iron absorption and iron storage in macrophages. May also have antimicrobial activity. In Danio rerio (Zebrafish), this protein is Hepcidin-2 (hamp2).